The chain runs to 112 residues: Na(+)/H(+) antiporter subunit C (112 aa).

3 helical membrane passes run 4-21 (LMSI…YLIL), 28-50 (VVVG…AGLQ), and 70-92 (QALI…VLAY).

The protein belongs to the CPA3 antiporters (TC 2.A.63) subunit C family. As to quaternary structure, forms a heterooligomeric complex that consists of seven subunits: MrpA, MrpB, MrpC, MrpD, MrpE, MrpF and MrpG.

It localises to the cell membrane. Functionally, mnh complex is a Na(+)Li(+)/H(+) antiporter involved in Na(+) and/or Li(+) excretion and Na(+) resistance. Na(+)/H(+) antiport consumes a transmembrane electrical potential, and is thus inferred to be electrogenic. Does not transport K(+), Ca(2+) or Mg(2+). This chain is Na(+)/H(+) antiporter subunit C (mrpC), found in Alkalihalophilus pseudofirmus (strain ATCC BAA-2126 / JCM 17055 / OF4) (Bacillus pseudofirmus).